Consider the following 137-residue polypeptide: Small ribosomal subunit protein uS9c (137 aa).

The protein belongs to the universal ribosomal protein uS9 family.

It is found in the plastid. The protein localises to the chloroplast. In Chlorella vulgaris (Green alga), this protein is Small ribosomal subunit protein uS9c (rps9).